Here is an 89-residue protein sequence, read N- to C-terminus: SAP domain-containing new25 (89 aa).

Positions 44–78 constitute an SAP domain; it reads PSQWSKKQLIEYCKKNSLKTSGSHEELVIRVQNHL.

The sequence is that of SAP domain-containing new25 (new25) from Schizosaccharomyces pombe (strain 972 / ATCC 24843) (Fission yeast).